A 137-amino-acid chain; its full sequence is uncharacterized protein (137 aa).

Residues 116–137 are disordered; sequence ARPPRGSGGTRTARNGARTASE. Polar residues predominate over residues 125–137; the sequence is TRTARNGARTASE.

This is an uncharacterized protein from Mycobacterium bovis (strain ATCC BAA-935 / AF2122/97).